Consider the following 305-residue polypeptide: Ribosomal protein L11 methyltransferase (305 aa).

Residues Thr-149, Gly-176, Asp-198, and Asn-240 each coordinate S-adenosyl-L-methionine.

Belongs to the methyltransferase superfamily. PrmA family.

The protein localises to the cytoplasm. The enzyme catalyses L-lysyl-[protein] + 3 S-adenosyl-L-methionine = N(6),N(6),N(6)-trimethyl-L-lysyl-[protein] + 3 S-adenosyl-L-homocysteine + 3 H(+). In terms of biological role, methylates ribosomal protein L11. The polypeptide is Ribosomal protein L11 methyltransferase (Trichlorobacter lovleyi (strain ATCC BAA-1151 / DSM 17278 / SZ) (Geobacter lovleyi)).